Consider the following 89-residue polypeptide: Large ribosomal subunit protein eL43 (89 aa).

Residues Cys-38, Cys-41, Cys-56, and Cys-59 each coordinate Zn(2+). The segment at 38-59 adopts a C4-type zinc-finger fold; that stretch reads CPSCDRPGVKRESRGIWKCRKC.

The protein belongs to the eukaryotic ribosomal protein eL43 family. Putative zinc-binding subfamily. In terms of assembly, part of the 50S ribosomal subunit. Zn(2+) is required as a cofactor.

Its function is as follows. Binds to the 23S rRNA. The chain is Large ribosomal subunit protein eL43 from Methanothermobacter thermautotrophicus (strain ATCC 29096 / DSM 1053 / JCM 10044 / NBRC 100330 / Delta H) (Methanobacterium thermoautotrophicum).